Here is a 145-residue protein sequence, read N- to C-terminus: Alpha-amylase/trypsin inhibitor CMa (145 aa).

The signal sequence occupies residues 1–25; sequence MASKSSITPLLLAAVLASVFAAATA.

It belongs to the protease inhibitor I6 (cereal trypsin/alpha-amylase inhibitor) family. As to quaternary structure, heterotetramer of one CMa, one CMb and two CMd chains. In terms of processing, five disulfide bonds, which are essential for the inhibitor activity, are probably present. In terms of tissue distribution, endosperm.

It localises to the secreted. In terms of biological role, alpha-amylase/trypsin inhibitor. It could be involved in insect defense mechanisms. This Hordeum vulgare (Barley) protein is Alpha-amylase/trypsin inhibitor CMa (IAT1).